Here is a 441-residue protein sequence, read N- to C-terminus: Ribulose bisphosphate carboxylase large chain (441 aa).

Substrate contacts are provided by Asn89 and Thr139. Residue Lys141 is the Proton acceptor of the active site. Lys143 is a binding site for substrate. Lys167, Asp169, and Glu170 together coordinate Mg(2+). An N6-carboxylysine modification is found at Lys167. The active-site Proton acceptor is the His260. 2 residues coordinate substrate: Xaa261 and Ser345.

The protein belongs to the RuBisCO large chain family. Type I subfamily. As to quaternary structure, heterohexadecamer of 8 large chains and 8 small chains; disulfide-linked. The disulfide link is formed within the large subunit homodimers. Mg(2+) serves as cofactor. In terms of processing, the disulfide bond which can form in the large chain dimeric partners within the hexadecamer appears to be associated with oxidative stress and protein turnover.

Its subcellular location is the plastid. The protein resides in the chloroplast. The catalysed reaction is 2 (2R)-3-phosphoglycerate + 2 H(+) = D-ribulose 1,5-bisphosphate + CO2 + H2O. It carries out the reaction D-ribulose 1,5-bisphosphate + O2 = 2-phosphoglycolate + (2R)-3-phosphoglycerate + 2 H(+). RuBisCO catalyzes two reactions: the carboxylation of D-ribulose 1,5-bisphosphate, the primary event in carbon dioxide fixation, as well as the oxidative fragmentation of the pentose substrate in the photorespiration process. Both reactions occur simultaneously and in competition at the same active site. The sequence is that of Ribulose bisphosphate carboxylase large chain from Asclepias exaltata (Poke milkweed).